The following is a 102-amino-acid chain: Small ribosomal subunit protein uS10 (102 aa).

Belongs to the universal ribosomal protein uS10 family. As to quaternary structure, part of the 30S ribosomal subunit.

Functionally, involved in the binding of tRNA to the ribosomes. The sequence is that of Small ribosomal subunit protein uS10 from Acidothermus cellulolyticus (strain ATCC 43068 / DSM 8971 / 11B).